The sequence spans 386 residues: Protein U3 (386 aa).

The sequence is that of Protein U3 (U3) from Human herpesvirus 6B (strain Z29) (HHV-6 variant B).